Reading from the N-terminus, the 226-residue chain is N-acetyltransferase family 8 member 2 (226 aa).

A run of 2 helical transmembrane segments spans residues 33–55 (FYHV…TIIL) and 60–82 (WLLA…WVSC). Residues 69-221 (LFLLCLRLIF…FHFTYSLPSV (153 aa)) form the N-acetyltransferase domain. At K204 the chain carries N6-acetyllysine.

This sequence belongs to the camello family.

It localises to the membrane. Its function is as follows. Probable acetyltransferase. Has no detectable histone acetyltransferase activity towards histone H3 or H4. The protein is N-acetyltransferase family 8 member 2 of Rattus norvegicus (Rat).